Consider the following 358-residue polypeptide: Molybdenum import ATP-binding protein ModC 2 (358 aa).

In terms of domain architecture, ABC transporter spans 1-234 (MPEQGIEAQL…PRLPLNHPDE (234 aa)). An ATP-binding site is contributed by 35 to 42 (GRSGSGKT). Positions 293–358 (NSSILNILRV…AQIKSVALME (66 aa)) constitute a Mop domain.

The protein belongs to the ABC transporter superfamily. Molybdate importer (TC 3.A.1.8) family. In terms of assembly, the complex is composed of two ATP-binding proteins (ModC), two transmembrane proteins (ModB) and a solute-binding protein (ModA).

It is found in the cell inner membrane. The catalysed reaction is molybdate(out) + ATP + H2O = molybdate(in) + ADP + phosphate + H(+). Functionally, part of the ABC transporter complex ModABC involved in molybdenum import. Responsible for energy coupling to the transport system. This chain is Molybdenum import ATP-binding protein ModC 2, found in Azotobacter vinelandii.